The chain runs to 186 residues: Lumazine protein (186 aa).

Lumazine-binding repeat units follow at residues 1 to 96 and 97 to 186; these read MFRG…VGRG and GLTG…LNEW.

It depends on 6,7-dimethyl-8-(1-D-ribityl)lumazine as a cofactor.

In terms of biological role, antenna protein that modulates the color of the bioluminescence emission of the luciferase. In the presence of LumP, luciferase emission is shifted to higher energy values (shorter wavelength). In Photobacterium leiognathi, this protein is Lumazine protein (lumP).